The chain runs to 453 residues: Bifunctional protein GlmU (453 aa).

Residues 1 to 231 form a pyrophosphorylase region; sequence MERTCLAVIL…EIEMTGCNTR (231 aa). UDP-N-acetyl-alpha-D-glucosamine-binding positions include 10-13, K24, Q77, 82-83, 105-107, G143, E157, N172, and N229; these read LAAG, GT, and YGD. D107 lines the Mg(2+) pocket. Position 229 (N229) interacts with Mg(2+). Residues 232–252 form a linker region; that stretch reads AELAVIERFWQERRRHQMMLS. Positions 253–453 are N-acetyltransferase; it reads GVTMIAPETV…AIKAAKKAKA (201 aa). UDP-N-acetyl-alpha-D-glucosamine is bound by residues R318 and K336. Catalysis depends on H348, which acts as the Proton acceptor. 2 residues coordinate UDP-N-acetyl-alpha-D-glucosamine: Y351 and N362. Acetyl-CoA contacts are provided by residues A365, 371–372, S390, S408, and R425; that span reads NY.

In the N-terminal section; belongs to the N-acetylglucosamine-1-phosphate uridyltransferase family. It in the C-terminal section; belongs to the transferase hexapeptide repeat family. Homotrimer. Mg(2+) is required as a cofactor.

It localises to the cytoplasm. It catalyses the reaction alpha-D-glucosamine 1-phosphate + acetyl-CoA = N-acetyl-alpha-D-glucosamine 1-phosphate + CoA + H(+). It carries out the reaction N-acetyl-alpha-D-glucosamine 1-phosphate + UTP + H(+) = UDP-N-acetyl-alpha-D-glucosamine + diphosphate. It functions in the pathway nucleotide-sugar biosynthesis; UDP-N-acetyl-alpha-D-glucosamine biosynthesis; N-acetyl-alpha-D-glucosamine 1-phosphate from alpha-D-glucosamine 6-phosphate (route II): step 2/2. Its pathway is nucleotide-sugar biosynthesis; UDP-N-acetyl-alpha-D-glucosamine biosynthesis; UDP-N-acetyl-alpha-D-glucosamine from N-acetyl-alpha-D-glucosamine 1-phosphate: step 1/1. The protein operates within bacterial outer membrane biogenesis; LPS lipid A biosynthesis. Functionally, catalyzes the last two sequential reactions in the de novo biosynthetic pathway for UDP-N-acetylglucosamine (UDP-GlcNAc). The C-terminal domain catalyzes the transfer of acetyl group from acetyl coenzyme A to glucosamine-1-phosphate (GlcN-1-P) to produce N-acetylglucosamine-1-phosphate (GlcNAc-1-P), which is converted into UDP-GlcNAc by the transfer of uridine 5-monophosphate (from uridine 5-triphosphate), a reaction catalyzed by the N-terminal domain. This is Bifunctional protein GlmU from Rhizobium johnstonii (strain DSM 114642 / LMG 32736 / 3841) (Rhizobium leguminosarum bv. viciae).